A 370-amino-acid polypeptide reads, in one-letter code: Chaperone protein DnaJ (370 aa).

The J domain occupies 4–68 (DYYQVLGVSK…QKRAAYDRFG (65 aa)). The segment at 133 to 211 (GIEKNISFSS…CHGMGRYHKQ (79 aa)) adopts a CR-type zinc-finger fold. The Zn(2+) site is built by Cys146, Cys149, Cys163, Cys166, Cys185, Cys188, Cys199, and Cys202. CXXCXGXG motif repeat units lie at residues 146 to 153 (CDACHGTG), 163 to 170 (CDSCGGVG), 185 to 192 (CHKCQGNG), and 199 to 206 (CKKCHGMG).

Belongs to the DnaJ family. In terms of assembly, homodimer. Zn(2+) serves as cofactor.

The protein resides in the cytoplasm. Participates actively in the response to hyperosmotic and heat shock by preventing the aggregation of stress-denatured proteins and by disaggregating proteins, also in an autonomous, DnaK-independent fashion. Unfolded proteins bind initially to DnaJ; upon interaction with the DnaJ-bound protein, DnaK hydrolyzes its bound ATP, resulting in the formation of a stable complex. GrpE releases ADP from DnaK; ATP binding to DnaK triggers the release of the substrate protein, thus completing the reaction cycle. Several rounds of ATP-dependent interactions between DnaJ, DnaK and GrpE are required for fully efficient folding. Also involved, together with DnaK and GrpE, in the DNA replication of plasmids through activation of initiation proteins. The sequence is that of Chaperone protein DnaJ from Rickettsia typhi (strain ATCC VR-144 / Wilmington).